The chain runs to 891 residues: DNA mismatch repair protein MutS (891 aa).

646–653 (GPNMAGKS) serves as a coordination point for ATP.

The protein belongs to the DNA mismatch repair MutS family.

In terms of biological role, this protein is involved in the repair of mismatches in DNA. It is possible that it carries out the mismatch recognition step. This protein has a weak ATPase activity. The sequence is that of DNA mismatch repair protein MutS from Rickettsia canadensis (strain McKiel).